A 380-amino-acid polypeptide reads, in one-letter code: N5-carboxyaminoimidazole ribonucleotide synthase (380 aa).

ATP contacts are provided by residues Arg-108, Lys-148, 153-159, 183-186, Glu-191, His-214, and 268-269; these read GYDGKGQ, ESWV, and NE. An ATP-grasp domain is found at 112–298; that stretch reads KKAIQSAGCE…QFEQHIRAVC (187 aa).

Belongs to the PurK/PurT family. In terms of assembly, homodimer.

It catalyses the reaction 5-amino-1-(5-phospho-beta-D-ribosyl)imidazole + hydrogencarbonate + ATP = 5-carboxyamino-1-(5-phospho-D-ribosyl)imidazole + ADP + phosphate + 2 H(+). It participates in purine metabolism; IMP biosynthesis via de novo pathway; 5-amino-1-(5-phospho-D-ribosyl)imidazole-4-carboxylate from 5-amino-1-(5-phospho-D-ribosyl)imidazole (N5-CAIR route): step 1/2. Functionally, catalyzes the ATP-dependent conversion of 5-aminoimidazole ribonucleotide (AIR) and HCO(3)(-) to N5-carboxyaminoimidazole ribonucleotide (N5-CAIR). This Bacillus subtilis (strain 168) protein is N5-carboxyaminoimidazole ribonucleotide synthase.